A 334-amino-acid polypeptide reads, in one-letter code: Ketol-acid reductoisomerase (NADP(+)) (334 aa).

A KARI N-terminal Rossmann domain is found at 2–181; sequence TKVYYDETVT…GATRAGVIET (180 aa). NADP(+) is bound by residues 25-28, Arg-48, Ser-52, and 82-85; these read YGSQ and DEIQ. The active site involves His-107. NADP(+) is bound at residue Gly-133. Positions 182–327 constitute a KARI C-terminal knotted domain; it reads TFKEETETDL…RELREMMPFI (146 aa). Residues Asp-190, Glu-194, Glu-226, and Glu-230 each contribute to the Mg(2+) site. Substrate is bound at residue Ser-251.

Belongs to the ketol-acid reductoisomerase family. Mg(2+) is required as a cofactor.

It catalyses the reaction (2R)-2,3-dihydroxy-3-methylbutanoate + NADP(+) = (2S)-2-acetolactate + NADPH + H(+). The enzyme catalyses (2R,3R)-2,3-dihydroxy-3-methylpentanoate + NADP(+) = (S)-2-ethyl-2-hydroxy-3-oxobutanoate + NADPH + H(+). Its pathway is amino-acid biosynthesis; L-isoleucine biosynthesis; L-isoleucine from 2-oxobutanoate: step 2/4. It functions in the pathway amino-acid biosynthesis; L-valine biosynthesis; L-valine from pyruvate: step 2/4. Its function is as follows. Involved in the biosynthesis of branched-chain amino acids (BCAA). Catalyzes an alkyl-migration followed by a ketol-acid reduction of (S)-2-acetolactate (S2AL) to yield (R)-2,3-dihydroxy-isovalerate. In the isomerase reaction, S2AL is rearranged via a Mg-dependent methyl migration to produce 3-hydroxy-3-methyl-2-ketobutyrate (HMKB). In the reductase reaction, this 2-ketoacid undergoes a metal-dependent reduction by NADPH to yield (R)-2,3-dihydroxy-isovalerate. In Staphylococcus epidermidis (strain ATCC 35984 / DSM 28319 / BCRC 17069 / CCUG 31568 / BM 3577 / RP62A), this protein is Ketol-acid reductoisomerase (NADP(+)).